Consider the following 710-residue polypeptide: Polyribonucleotide nucleotidyltransferase (710 aa).

Mg(2+)-binding residues include aspartate 489 and aspartate 495. The KH domain maps to proline 556–isoleucine 615. Positions glycine 625–lysine 693 constitute an S1 motif domain. Residues serine 691–aspartate 710 form a disordered region. Residues proline 700–aspartate 710 are compositionally biased toward basic and acidic residues.

Belongs to the polyribonucleotide nucleotidyltransferase family. Mg(2+) serves as cofactor.

The protein resides in the cytoplasm. It carries out the reaction RNA(n+1) + phosphate = RNA(n) + a ribonucleoside 5'-diphosphate. Functionally, involved in mRNA degradation. Catalyzes the phosphorolysis of single-stranded polyribonucleotides processively in the 3'- to 5'-direction. This chain is Polyribonucleotide nucleotidyltransferase, found in Streptococcus pyogenes serotype M49 (strain NZ131).